Here is a 174-residue protein sequence, read N- to C-terminus: MTLILGIDPGSRITGFGVVRETARGCEYVASGCIRTGNGPLHERLHVVFRSVREVIRTHGPTALSIEQVFMARNADSALKLGQARGAAIVAAMEEGLSVAEYTASQVKQAVVGTGGADKQQVQMMVMHLLKLTQKPQIDASDALAIALCHAHTQQSLVPHGLVGARRRGGRLRL.

Active-site residues include Asp8, Glu67, and Asp139. The Mg(2+) site is built by Asp8, Glu67, and Asp139.

Belongs to the RuvC family. Homodimer which binds Holliday junction (HJ) DNA. The HJ becomes 2-fold symmetrical on binding to RuvC with unstacked arms; it has a different conformation from HJ DNA in complex with RuvA. In the full resolvosome a probable DNA-RuvA(4)-RuvB(12)-RuvC(2) complex forms which resolves the HJ. Mg(2+) is required as a cofactor.

It localises to the cytoplasm. It carries out the reaction Endonucleolytic cleavage at a junction such as a reciprocal single-stranded crossover between two homologous DNA duplexes (Holliday junction).. In terms of biological role, the RuvA-RuvB-RuvC complex processes Holliday junction (HJ) DNA during genetic recombination and DNA repair. Endonuclease that resolves HJ intermediates. Cleaves cruciform DNA by making single-stranded nicks across the HJ at symmetrical positions within the homologous arms, yielding a 5'-phosphate and a 3'-hydroxyl group; requires a central core of homology in the junction. The consensus cleavage sequence is 5'-(A/T)TT(C/G)-3'. Cleavage occurs on the 3'-side of the TT dinucleotide at the point of strand exchange. HJ branch migration catalyzed by RuvA-RuvB allows RuvC to scan DNA until it finds its consensus sequence, where it cleaves and resolves the cruciform DNA. This Pseudomonas aeruginosa (strain LESB58) protein is Crossover junction endodeoxyribonuclease RuvC.